We begin with the raw amino-acid sequence, 382 residues long: Protein MGF 360-4L (382 aa).

It belongs to the asfivirus MGF 360 family.

In terms of biological role, plays a role in virus cell tropism, and may be required for efficient virus replication in macrophages. The sequence is that of Protein MGF 360-4L from Ornithodoros (relapsing fever ticks).